A 403-amino-acid polypeptide reads, in one-letter code: F-box protein At2g40925 (403 aa).

One can recognise an F-box domain in the interval 21 to 71 (NRHDCEIPPDLMIEILIRLPTKSFMRFKCVSKQWSPLISGRYFCNRLFTCV).

In Arabidopsis thaliana (Mouse-ear cress), this protein is F-box protein At2g40925.